We begin with the raw amino-acid sequence, 305 residues long: CRISPR-associated endonuclease Cas1 (305 aa).

Positions 96-278 (SDKLLYQAKL…EDVLAAGEIQ (183 aa)) are sufficient for cleavage of ssRNA, ssDNA and Holliday junction DNA. Positions 141, 208, and 221 each coordinate Mg(2+). A disordered region spans residues 278–305 (QPPAPPEDAQPVAIPLPVSLGDAGHRSS).

The protein belongs to the CRISPR-associated endonuclease Cas1 family. Homodimer. Part of the Cas1-Cas2 complex. Interacts with RecB, RecC, RuvB, CasC and CasE. Forms a hexamer with 2 Cas1 dimers sandwiching a Cas2 dimer. The DNA lies across a flat surface extending from 1 Cas1 dimer, across the Cas2 dimer and contacting the other Cas1 dimer. Only 1 Cas1 protein from each dimer is catalytic, the other interacts with the Cas2 dimer and possibly target DNA. Requires Mg(2+) as cofactor.

It is found in the cytoplasm. With respect to regulation, nuclease activity partially inhibited by CasE. In terms of biological role, CRISPR (clustered regularly interspaced short palindromic repeat), is an adaptive immune system that provides protection against mobile genetic elements (viruses, transposable elements and conjugative plasmids). CRISPR clusters contain sequences complementary to antecedent mobile elements and target invading nucleic acids. CRISPR clusters are transcribed and processed into CRISPR RNA (crRNA). The Cas1-Cas2 complex is involved in CRISPR adaptation, the first stage of CRISPR immunity, being required for the addition/removal of CRISPR spacers at the leader end of the CRISPR locus. The Cas1-Cas2 complex introduces staggered nicks into both strands of the CRISPR array near the leader repeat and joins the 5'-ends of the repeat strands with the 3'-ends of the new spacer sequence. Spacer DNA integration requires supercoiled target DNA and 3'-OH ends on the inserted (spacer) DNA and probably initiates with a nucleophilic attack of the C 3'-OH end of the protospacer on the minus strand of the first repeat sequence. Expression of Cas1-Cas2 in a strain lacking both genes permits spacer acquisition. Non-specifically binds DNA; the Cas1-Cas2 complex preferentially binds CRISPR-locus DNA. Highest binding is seen to a dual forked DNA complex with 3'-overhangs and a protospacer-adjacent motif-complement specifically positioned. The protospacer DNA lies across a flat surface extending from 1 Cas1 dimer, across the Cas2 dimer and contacting the other Cas1 dimer; the 23 bp-long ds section of the DNA is bracketed by 1 Tyr-22 from each of the Cas1 dimers. Cas1 cuts within the 3'-overhang, to generate a 33-nucleotide DNA that is probably incorporated into the CRISPR leader by a cut-and-paste mechanism. Cas1 alone endonucleolytically cleaves linear ssRNA, ssDNA and short (34 base) dsDNA as well as branched DNA substrates such as Holliday junctions, replication forks and 5'-flap DNA substrates. In vitro catalyzes a concerted transesterification reaction on branched DNA, as would be expected during integration of protospacers into the CRISPR leader sequence; Cas2 is not required in vitro. This reaction requires a 3'-OH group at the branch point. Genetic interactions suggest Cas1 interacts with components of the RecBC and RuvB DNA repair systems. The protein is CRISPR-associated endonuclease Cas1 (ygbT) of Escherichia coli (strain K12).